The chain runs to 328 residues: tRNA uridine(34) hydroxylase (328 aa).

Positions 122–218 (QENRCLVLDV…YGLKMGTGKW (97 aa)) constitute a Rhodanese domain. The active-site Cysteine persulfide intermediate is the Cys178.

It belongs to the TrhO family.

The catalysed reaction is uridine(34) in tRNA + AH2 + O2 = 5-hydroxyuridine(34) in tRNA + A + H2O. In terms of biological role, catalyzes oxygen-dependent 5-hydroxyuridine (ho5U) modification at position 34 in tRNAs. This Chlamydia muridarum (strain MoPn / Nigg) protein is tRNA uridine(34) hydroxylase.